Reading from the N-terminus, the 825-residue chain is Probable inorganic carbon transporter subunit DabA (825 aa).

Cysteine 334, aspartate 336, histidine 521, and cysteine 536 together coordinate Zn(2+).

This sequence belongs to the inorganic carbon transporter (TC 9.A.2) DabA family. In terms of assembly, forms a complex with DabB. The cofactor is Zn(2+).

It is found in the cell inner membrane. Part of an energy-coupled inorganic carbon pump. In Acidithiobacillus ferrooxidans (strain ATCC 23270 / DSM 14882 / CIP 104768 / NCIMB 8455) (Ferrobacillus ferrooxidans (strain ATCC 23270)), this protein is Probable inorganic carbon transporter subunit DabA.